The chain runs to 636 residues: Sodium-dependent multivitamin transporter (636 aa).

12 helical membrane passes run Phe-24–Leu-44, Cys-68–Val-88, Phe-101–Phe-121, Ile-143–Ala-163, Leu-176–Leu-196, Val-199–Ile-219, Phe-256–Ala-276, Val-297–Ala-317, Phe-336–Val-356, Phe-404–Leu-424, Ile-428–Phe-448, and Ala-456–Val-476. N-linked (GlcNAc...) asparagine glycosylation is found at Asn-489 and Asn-498. Residues Leu-528–Leu-548 form a helical membrane-spanning segment. The interval Leu-606–Pro-627 is disordered.

The protein belongs to the sodium:solute symporter (SSF) (TC 2.A.21) family. Interacts with PDZD11.

It localises to the cell membrane. The protein resides in the apical cell membrane. The enzyme catalyses biotin(out) + 2 Na(+)(out) = biotin(in) + 2 Na(+)(in). It catalyses the reaction (R)-pantothenate(out) + 2 Na(+)(out) = (R)-pantothenate(in) + 2 Na(+)(in). The catalysed reaction is (R)-lipoate(out) + 2 Na(+)(out) = (R)-lipoate(in) + 2 Na(+)(in). It carries out the reaction iodide(out) + 2 Na(+)(out) = iodide(in) + 2 Na(+)(in). Functionally, sodium-dependent multivitamin transporter that mediates the electrogenic transport of pantothenate, biotin, lipoate and iodide. Functions as a Na(+)-coupled substrate symporter where the stoichiometry of Na(+):substrate is 2:1, creating an electrochemical Na(+) gradient used as driving force for substrate uptake. Required for biotin and pantothenate uptake in the intestine across the brush border membrane. Plays a role in the maintenance of intestinal mucosa integrity, by providing the gut mucosa with biotin. Contributes to the luminal uptake of biotin and pantothenate into the brain across the blood-brain barrier. This Oryctolagus cuniculus (Rabbit) protein is Sodium-dependent multivitamin transporter (SLC5A6).